We begin with the raw amino-acid sequence, 313 residues long: Protease HtpX homolog (313 aa).

The next 2 helical transmembrane spans lie at 7 to 24 and 29 to 46; these read AMLL…GYLI and GMMI…FSYW. H130 provides a ligand contact to Zn(2+). E131 is a catalytic residue. H134 contributes to the Zn(2+) binding site. Helical transmembrane passes span 145 to 165 and 172 to 192; these read ITAT…FFGG and PFGF…AMVV. E201 is a binding site for Zn(2+). Residues 282-313 form a disordered region; it reads GNAPPASLREDEPGADGPWGRSASRARKGPWS.

The protein belongs to the peptidase M48B family. Zn(2+) serves as cofactor.

It localises to the cell inner membrane. This Chelativorans sp. (strain BNC1) protein is Protease HtpX homolog.